Here is a 288-residue protein sequence, read N- to C-terminus: MAGAKEIRSKISSINKTRKITRAMEMVAASKMRKTQERMRASKPYANKIYEVIKHIARAASEYRHPFMSEREIKRIGIIVVTTDRGLCGGLNSNLFRETIRTIRNWQEHGKEVDIAVIGRKGQAFFRRVGGNILGSIDHLGDTPSINDFIGVVKIMLDAYYNGAIDSLHIVYNEFINTMTQKPFVKQLLPLPKSEEDKKTLGHHWDYIYEPEAKELLDEILERYIELQVYQAVVENIACEQAAKMIAMKSATDNAGDLIKEFQLAYNKARQAAITQELAEIVGGAAAL.

This sequence belongs to the ATPase gamma chain family. As to quaternary structure, F-type ATPases have 2 components, CF(1) - the catalytic core - and CF(0) - the membrane proton channel. CF(1) has five subunits: alpha(3), beta(3), gamma(1), delta(1), epsilon(1). CF(0) has three main subunits: a, b and c.

It is found in the cell inner membrane. Produces ATP from ADP in the presence of a proton gradient across the membrane. The gamma chain is believed to be important in regulating ATPase activity and the flow of protons through the CF(0) complex. This is ATP synthase gamma chain from Legionella pneumophila (strain Paris).